A 147-amino-acid polypeptide reads, in one-letter code: Phosphoribosyl-AMP cyclohydrolase (147 aa).

Position 91 (Asp-91) interacts with Mg(2+). Cys-92 serves as a coordination point for Zn(2+). Mg(2+) is bound by residues Asp-93 and Asp-95. Residues Cys-108 and Cys-115 each contribute to the Zn(2+) site.

This sequence belongs to the PRA-CH family. In terms of assembly, homodimer. The cofactor is Mg(2+). Zn(2+) serves as cofactor.

It is found in the cytoplasm. The enzyme catalyses 1-(5-phospho-beta-D-ribosyl)-5'-AMP + H2O = 1-(5-phospho-beta-D-ribosyl)-5-[(5-phospho-beta-D-ribosylamino)methylideneamino]imidazole-4-carboxamide. The protein operates within amino-acid biosynthesis; L-histidine biosynthesis; L-histidine from 5-phospho-alpha-D-ribose 1-diphosphate: step 3/9. Functionally, catalyzes the hydrolysis of the adenine ring of phosphoribosyl-AMP. This is Phosphoribosyl-AMP cyclohydrolase from Rhodopseudomonas palustris (strain BisB5).